The primary structure comprises 206 residues: Large ribosomal subunit protein uL3 (206 aa).

The tract at residues 122–154 is disordered; that stretch reads VVKRHGHAGGPGGHGSRFHRHPGSMGANSTPSR.

Belongs to the universal ribosomal protein uL3 family. In terms of assembly, part of the 50S ribosomal subunit. Forms a cluster with proteins L14 and L19.

One of the primary rRNA binding proteins, it binds directly near the 3'-end of the 23S rRNA, where it nucleates assembly of the 50S subunit. The chain is Large ribosomal subunit protein uL3 from Leptospira borgpetersenii serovar Hardjo-bovis (strain JB197).